A 452-amino-acid chain; its full sequence is tRNA modification GTPase MnmE (452 aa).

Residues Arg-21, Glu-78, and Lys-118 each contribute to the (6S)-5-formyl-5,6,7,8-tetrahydrofolate site. Residues Gly-214–Gly-375 form the TrmE-type G domain. Position 224 (Asn-224) interacts with K(+). GTP contacts are provided by residues Asn-224–Ser-229, Thr-243–Thr-249, and Asp-268–Gly-271. Ser-228 lines the Mg(2+) pocket. K(+) contacts are provided by Thr-243, Ile-245, and Thr-248. Mg(2+) is bound at residue Thr-249. Lys-452 serves as a coordination point for (6S)-5-formyl-5,6,7,8-tetrahydrofolate.

Belongs to the TRAFAC class TrmE-Era-EngA-EngB-Septin-like GTPase superfamily. TrmE GTPase family. Homodimer. Heterotetramer of two MnmE and two MnmG subunits. K(+) is required as a cofactor.

Its subcellular location is the cytoplasm. Exhibits a very high intrinsic GTPase hydrolysis rate. Involved in the addition of a carboxymethylaminomethyl (cmnm) group at the wobble position (U34) of certain tRNAs, forming tRNA-cmnm(5)s(2)U34. This Haemophilus influenzae (strain ATCC 51907 / DSM 11121 / KW20 / Rd) protein is tRNA modification GTPase MnmE.